We begin with the raw amino-acid sequence, 357 residues long: Serine/threonine-protein kinase nekl-2 (357 aa).

The Protein kinase domain occupies 4–267; sequence YEKVRVVGRG…VSQLLSDPLV (264 aa). Residues 10-18 and Lys-35 contribute to the ATP site; that span reads VGRGAFGVC. Asp-137 acts as the Proton acceptor in catalysis. Positions 281 to 290 are enriched in basic and acidic residues; it reads IEPPPTDKRK. Positions 281–357 are disordered; sequence IEPPPTDKRK…QSRSQVHSKY (77 aa). Polar residues-rich tracts occupy residues 293–327 and 336–357; these read ASLSSRLRTYPTQSTLRPYSLSSNAPTTHLTQLTP and FFSSGRTSNQRTQSRSQVHSKY.

Belongs to the protein kinase superfamily. NEK Ser/Thr protein kinase family. NIMA subfamily. Mg(2+) is required as a cofactor. Expressed in hypodermal cells including in hyp7 syncytium but not in seam cells.

It is found in the cytoplasm. The enzyme catalyses L-seryl-[protein] + ATP = O-phospho-L-seryl-[protein] + ADP + H(+). The catalysed reaction is L-threonyl-[protein] + ATP = O-phospho-L-threonyl-[protein] + ADP + H(+). Functionally, probable serine/threonine-protein kinase required for the completion of molting. May play a role in endocytosis in the hypodermis syncytium. The chain is Serine/threonine-protein kinase nekl-2 from Caenorhabditis elegans.